The sequence spans 955 residues: 2-oxoglutarate dehydrogenase E1 component (955 aa).

The protein belongs to the alpha-ketoglutarate dehydrogenase family. In terms of assembly, homodimer. Part of the 2-oxoglutarate dehydrogenase (OGDH) complex composed of E1 (2-oxoglutarate dehydrogenase), E2 (dihydrolipoamide succinyltransferase) and E3 (dihydrolipoamide dehydrogenase); the complex contains multiple copies of the three enzymatic components (E1, E2 and E3). Requires thiamine diphosphate as cofactor.

It catalyses the reaction N(6)-[(R)-lipoyl]-L-lysyl-[protein] + 2-oxoglutarate + H(+) = N(6)-[(R)-S(8)-succinyldihydrolipoyl]-L-lysyl-[protein] + CO2. Its function is as follows. E1 component of the 2-oxoglutarate dehydrogenase (OGDH) complex which catalyzes the decarboxylation of 2-oxoglutarate, the first step in the conversion of 2-oxoglutarate to succinyl-CoA and CO(2). The polypeptide is 2-oxoglutarate dehydrogenase E1 component (Bacillus anthracis (strain A0248)).